The chain runs to 259 residues: Apolipoprotein A-I (259 aa).

The N-terminal stretch at 1–18 (MKAAVLAVALVFLTGCQA) is a signal peptide. 2 tandem repeats follow at residues 67–88 (LNLLDNWDTLGSTVGRLQEQLG) and 89–110 (PVTQEFWANLEKETDWLRNEMN). The 10 X approximate tandem repeats stretch occupies residues 67 to 259 (LNLLDNWDTL…IDEAKKKLNA (193 aa)). Met109 carries the post-translational modification Methionine sulfoxide. The 3; half-length repeat unit spans residues 111 to 121 (KDLENVKQKMQ). Copy 4 of the repeat occupies 122–143 (PHLDEFQEKWNEEVEAYRQKLE). One copy of the 5; truncated repeat lies at 144–161 (PLGTELHKNAKEMQRHLK). The stretch at 162–183 (VVAEEFRDRMRVNADALRAKFG) is repeat 6. The stretch at 184–203 (LYSDQMRENLAQRLTEIKNH) is one 7; truncated repeat. Met189 is modified (methionine sulfoxide). Repeat 8 spans residues 204–225 (PTLIEYHTKASDHLKTLGEKAK). Residues 226 to 236 (PALDDLGQGLM) form a 9; half-length repeat. Residue Met236 is modified to Methionine sulfoxide. Repeat unit 10 spans residues 237 to 259 (PVLEAWKAKIMSMIDEAKKKLNA).

This sequence belongs to the apolipoprotein A1/A4/E family. As to quaternary structure, homodimer. Interacts with APOA1BP and CLU. Component of a sperm activating protein complex (SPAP), consisting of APOA1, an immunoglobulin heavy chain, an immunoglobulin light chain and albumin. Interacts with NDRG1. Interacts with SCGB3A2. Interacts with NAXE and YJEFN3. Glycosylated. Post-translationally, palmitoylated. In terms of processing, phosphorylation sites are present in the extracellular medium. As to expression, major protein of plasma HDL, also found in chylomicrons.

Its subcellular location is the secreted. In terms of biological role, participates in the reverse transport of cholesterol from tissues to the liver for excretion by promoting cholesterol efflux from tissues and by acting as a cofactor for the lecithin cholesterol acyltransferase (LCAT). As part of the SPAP complex, activates spermatozoa motility. The chain is Apolipoprotein A-I (Apoa1) from Rattus norvegicus (Rat).